Consider the following 236-residue polypeptide: H2HPP isomerase (236 aa).

2 consecutive Cupin type-2 domains span residues 40 to 106 (YVPP…AIDI) and 151 to 215 (NIPG…SKSV). A divalent metal cation contacts are provided by His-50, His-52, Gln-56, His-91, His-162, His-164, Gln-168, and His-202. Tyr-223 lines the substrate pocket.

Monomer. Fe(2+) is required as a cofactor. Requires Co(2+) as cofactor.

It localises to the cytoplasm. It carries out the reaction 3-[(4R)-4-hydroxycyclohexa-1,5-dien-1-yl]-2-oxopropanoate = 3-[(1E,4R)-4-hydroxycyclohex-2-en-1-ylidene]pyruvate. The protein operates within antibiotic biosynthesis; bacilysin biosynthesis. In terms of biological role, part of the bacABCDEF operon responsible for the biosynthesis of the nonribosomally synthesized dipeptide antibiotic bacilysin, composed of L-alanine and L-anticapsin. Bacilysin is an irreversible inactivator of the glutaminase domain of glucosamine synthetase. BacB catalyzes the allylic isomerization of the endocyclic-delta(4),delta(8)-7R-dihydro-hydroxyphenylpyruvate (en-H2HPP) to generate a mixture of 3E,7R- and 3Z, 7R-olefins of the exocyclic-delta(3),delta(5)-dihydro-hydroxyphenylpyruvate (ex-H2HPP). In Bacillus amyloliquefaciens (Bacillus velezensis), this protein is H2HPP isomerase.